Reading from the N-terminus, the 68-residue chain is Large ribosomal subunit protein bL35 (68 aa).

It belongs to the bacterial ribosomal protein bL35 family.

This is Large ribosomal subunit protein bL35 from Aster yellows witches'-broom phytoplasma (strain AYWB).